A 58-amino-acid chain; its full sequence is Ranakinin-N (58 aa).

A signal peptide spans 1–22 (MFTMKKSLLLLFFLGTISMSLC). Positions 23–43 (EEKRDADEEETEGEAKMEDIK) are excised as a propeptide. The disordered stretch occupies residues 25 to 58 (KRDADEEETEGEAKMEDIKRAEAVPPGFTPFRKP). Residues 35–46 (GEAKMEDIKRAE) show a composition bias toward basic and acidic residues.

As to expression, expressed by the skin glands.

The protein localises to the secreted. Induces contraction of intestinal smooth muscle in isolated guinea pig ileum. May induce relaxation of arterial smooth muscle. May target bradykinin receptors (BDKRB). Lacks antibacterial activity against the Gram-positive bacterium S.aureus and the Gram-negative bacteria E.coli and B.dysenteria, and antifungal activity against C.albicans. This is Ranakinin-N from Hylarana nigrovittata (Black-striped frog).